We begin with the raw amino-acid sequence, 122 residues long: MSRIITAPHIGIEKLSAISLEELSCGLPERYALPPDGHPVEPHLERLYPTAQSKRSLWDFASPGYTFHGLHRAQDYRRELDTLQSLLTTSQSSELQAAAALLKCQQDDDRLLQIILNLLHKV.

Residues 71-87 (HRAQDYRRELDTLQSLL) are a coiled coil.

Interacts with YscY.

The protein localises to the secreted. Its function is as follows. Required for Yop secretion. The polypeptide is Yop proteins translocation protein X (yscX) (Yersinia enterocolitica serotype O:8 / biotype 1B (strain NCTC 13174 / 8081)).